The chain runs to 883 residues: Phosphoenolpyruvate carboxylase (883 aa).

Residues histidine 138 and lysine 546 contribute to the active site.

The protein belongs to the PEPCase type 1 family. It depends on Mg(2+) as a cofactor.

The catalysed reaction is oxaloacetate + phosphate = phosphoenolpyruvate + hydrogencarbonate. Its function is as follows. Forms oxaloacetate, a four-carbon dicarboxylic acid source for the tricarboxylic acid cycle. This Escherichia coli O81 (strain ED1a) protein is Phosphoenolpyruvate carboxylase.